The sequence spans 340 residues: Methionine import ATP-binding protein MetN 2 (340 aa).

Residues 5 to 244 (VRFESVTKTF…PQAPASKSFV (240 aa)) enclose the ABC transporter domain. Residue 41-48 (GYSGAGKS) coordinates ATP.

The protein belongs to the ABC transporter superfamily. Methionine importer (TC 3.A.1.24) family. As to quaternary structure, the complex is composed of two ATP-binding proteins (MetN), two transmembrane proteins (MetI) and a solute-binding protein (MetQ).

Its subcellular location is the cell membrane. It catalyses the reaction L-methionine(out) + ATP + H2O = L-methionine(in) + ADP + phosphate + H(+). The catalysed reaction is D-methionine(out) + ATP + H2O = D-methionine(in) + ADP + phosphate + H(+). Its function is as follows. Part of the ABC transporter complex MetNIQ involved in methionine import. Responsible for energy coupling to the transport system. The polypeptide is Methionine import ATP-binding protein MetN 2 (Rhodococcus jostii (strain RHA1)).